Consider the following 208-residue polypeptide: Adapter protein MecA (208 aa).

Belongs to the MecA family. As to quaternary structure, homodimer.

Functionally, enables the recognition and targeting of unfolded and aggregated proteins to the ClpC protease or to other proteins involved in proteolysis. In Exiguobacterium sibiricum (strain DSM 17290 / CCUG 55495 / CIP 109462 / JCM 13490 / 255-15), this protein is Adapter protein MecA.